We begin with the raw amino-acid sequence, 251 residues long: MQFPVDTHSHTVASTHAYSTIHDYLAVAKEKGIRLFATTDHGPAMKDAPHFWHFVNLRVLPRIWNGVGILRGIEANIMNEKGEIDYFGEYLSELDLVQAGFHEPVFAPADRLTHTRAMIATMESGLVDIITHPGNPAYPIDVEAVVGAAKACNVALEINNSSFTASRKGSEENCLAIARMATKLDAQLVMGSDAHVAFDLGGFDRSLAIVDAADYPRQRLLNESPMALLHFLQQRGHQHLDELIRYFRPVL.

Zn(2+)-binding residues include histidine 8, histidine 10, histidine 16, histidine 41, glutamate 74, histidine 102, histidine 132, aspartate 193, and histidine 195.

Belongs to the PHP family. The cofactor is Zn(2+).

This Shewanella amazonensis (strain ATCC BAA-1098 / SB2B) protein is Probable phosphatase Sama_2233.